The chain runs to 1562 residues: Cell surface antigen I/II (1562 aa).

A signal peptide spans 1–38 (MKVKKTYGFRKSKISKTLCGAVLGTVAAVSVAGQKVFA). Residues 42 to 54 (TTTSDVDTKVVGT) are compositionally biased toward low complexity. Positions 42–91 (TTTSDVDTKVVGTQTGNPATNLPEAQGSASKEAEQSQNQAGETNGSIPVE) are disordered. The interval 60–551 (ATNLPEAQGS…SKAKYDQKIL (492 aa)) is helical. Positions 76-87 (QSQNQAGETNGS) are enriched in polar residues. Ag I/II A repeat units lie at residues 147–221 (KKTT…QKTN), 222–303 (AANQ…QEAN), 304–385 (AANE…KKAN), and 386–467 (AANE…QKDL). 2 disordered regions span residues 824–973 (VPKV…PTDP) and 1482–1509 (SNTV…RTST). Positions 943-958 (PTPPTPTPDQPEPNKP) are enriched in pro residues. Residues 1500–1509 (QDPSSPRTST) are compositionally biased toward low complexity. The short motif at 1529–1533 (LPNTG) is the LPXTG sorting signal element. T1532 carries the post-translational modification Pentaglycyl murein peptidoglycan amidated threonine. A propeptide spans 1533-1562 (GVTNNAYMPLLGIIGLVTSFSLLGLKAKKD) (removed by sortase).

Belongs to the antigen I/II family. Post-translationally, detected as a 185 kDa cell surface protein, but also as 2 proteins in S.mutans culture supernatants of about 150 kDa (antigen I) and 50 kDa (antigen II); antigen II is only seen after proteolysis. Antigen I and II have the same N-terminus but different C-termini.

The protein resides in the secreted. It is found in the cell wall. In terms of biological role, surface protein antigen implicated in dental caries. This is Cell surface antigen I/II from Streptococcus mutans serotype c (strain ATCC 700610 / UA159).